An 826-amino-acid polypeptide reads, in one-letter code: Glycerol-3-phosphate acyltransferase 1, mitochondrial (826 aa).

Residues 1-87 (MDESALTLGT…FFNPSIPSLG (87 aa)) lie on the Cytoplasmic side of the membrane. Residues 80 to 120 (NPSIPSLGLRNVIYINETHTRHRGWLARRLSYVLFIQERDV) form an important for mitochondrial localization region. An intramembrane segment occupies 88-118 (LRNVIYINETHTRHRGWLARRLSYVLFIQER). Residues 119–826 (DVHKGMFATN…LEYILSFVVL (708 aa)) are Cytoplasmic-facing. Positions 230–235 (HRSHID) match the HXXXXD motif motif. Residues R278, R279, K288, R293, and R328 each coordinate CoA. Residue S380 is modified to Phosphoserine. R462 is a CoA binding site. A phosphoserine mark is found at S686 and S693. K778 and K782 each carry N6-acetyllysine.

Belongs to the GPAT/DAPAT family.

The protein localises to the mitochondrion outer membrane. The catalysed reaction is sn-glycerol 3-phosphate + an acyl-CoA = a 1-acyl-sn-glycero-3-phosphate + CoA. It carries out the reaction (9Z,12Z)-octadecadienoyl-CoA + sn-glycerol 3-phosphate = 1-(9Z,12Z)-octadecadienoyl-sn-glycero-3-phosphate + CoA. The enzyme catalyses sn-glycerol 3-phosphate + (9Z)-octadecenoyl-CoA = 1-(9Z-octadecenoyl)-sn-glycero-3-phosphate + CoA. It catalyses the reaction sn-glycerol 3-phosphate + octadecanoyl-CoA = 1-octadecanoyl-sn-glycero-3-phosphate + CoA. The catalysed reaction is sn-glycerol 3-phosphate + hexadecanoyl-CoA = 1-hexadecanoyl-sn-glycero-3-phosphate + CoA. It carries out the reaction dodecanoyl-CoA + sn-glycerol 3-phosphate = 1-dodecanoyl-sn-glycerol 3-phosphate + CoA. The enzyme catalyses 1-acyl-sn-glycero-3-phospho-(1'-sn-glycerol) + an acyl-CoA = a 1,2-diacyl-sn-glycero-3-phospho-(1'-sn-glycerol) + CoA. The protein operates within phospholipid metabolism; CDP-diacylglycerol biosynthesis; CDP-diacylglycerol from sn-glycerol 3-phosphate: step 1/3. Its function is as follows. Mitochondrial membrane protein that catalyzes the essential first step of biosynthesis of glycerolipids such as triglycerides, phosphatidic acids and lysophosphatidic acids. Esterifies acyl-group from acyl-coenzyme A (acyl-CoA) to the sn-1 position of glycerol-3-phosphate, to produce lysophosphatidic acid. Has a narrow hydrophobic binding cleft that selects for a linear acyl chain. Catalytic activity is higher for substrates with a 16-carbon acyl chain. The protein is Glycerol-3-phosphate acyltransferase 1, mitochondrial of Sus scrofa (Pig).